The following is a 132-amino-acid chain: Flagellar basal body rod protein FlgB (132 aa).

The protein belongs to the flagella basal body rod proteins family. The basal body constitutes a major portion of the flagellar organelle and consists of a number of rings mounted on a central rod. In Gram-negative bacteria, at least four rings, L, P, S and M are present, whereas Gram-positive bacteria lack the L and P rings. The rod consists of about 26 subunits of FlgG in the distal portion, and FlgB, FlgC and FlgF build up the proximal portion of the rod with about 6 subunits each. Rod assembly occurs by export via the flagellum-specific pathway of its constituent proteins and by their incorporation into the rod structure in the probable order of FlgB, FlgC, FlgF and FlgG. Another protein, FliE, also assembles onto the stable rod structure.

The protein localises to the bacterial flagellum basal body. Structural component of flagellum, the bacterial motility apparatus. Part of the rod structure of flagellar basal body. This chain is Flagellar basal body rod protein FlgB, found in Aeromonas hydrophila.